Reading from the N-terminus, the 419-residue chain is Serine hydroxymethyltransferase (419 aa).

(6S)-5,6,7,8-tetrahydrofolate is bound by residues Leu121 and 125 to 127; that span reads GHL. An N6-(pyridoxal phosphate)lysine modification is found at Lys230. 355–357 is a binding site for (6S)-5,6,7,8-tetrahydrofolate; that stretch reads SPF.

Belongs to the SHMT family. In terms of assembly, homodimer. Pyridoxal 5'-phosphate is required as a cofactor.

It is found in the cytoplasm. It carries out the reaction (6R)-5,10-methylene-5,6,7,8-tetrahydrofolate + glycine + H2O = (6S)-5,6,7,8-tetrahydrofolate + L-serine. Its pathway is one-carbon metabolism; tetrahydrofolate interconversion. The protein operates within amino-acid biosynthesis; glycine biosynthesis; glycine from L-serine: step 1/1. In terms of biological role, catalyzes the reversible interconversion of serine and glycine with tetrahydrofolate (THF) serving as the one-carbon carrier. This reaction serves as the major source of one-carbon groups required for the biosynthesis of purines, thymidylate, methionine, and other important biomolecules. Also exhibits THF-independent aldolase activity toward beta-hydroxyamino acids, producing glycine and aldehydes, via a retro-aldol mechanism. The sequence is that of Serine hydroxymethyltransferase from Streptococcus uberis (strain ATCC BAA-854 / 0140J).